The sequence spans 141 residues: Holo-[acyl-carrier-protein] synthase (141 aa).

Mg(2+) contacts are provided by D8 and E61.

It belongs to the P-Pant transferase superfamily. AcpS family. Requires Mg(2+) as cofactor.

It is found in the cytoplasm. The enzyme catalyses apo-[ACP] + CoA = holo-[ACP] + adenosine 3',5'-bisphosphate + H(+). In terms of biological role, transfers the 4'-phosphopantetheine moiety from coenzyme A to a Ser of acyl-carrier-protein. The polypeptide is Holo-[acyl-carrier-protein] synthase (Rhodopseudomonas palustris (strain HaA2)).